Reading from the N-terminus, the 55-residue chain is Neurotoxin X-29S (55 aa).

The first 23 residues, 1 to 23 (MKIFFAVLVILVLFSMLIWTAYG), serve as a signal peptide directing secretion. 3 disulfides stabilise this stretch: cysteine 30–cysteine 45, cysteine 36–cysteine 50, and cysteine 39–cysteine 53.

Expressed by the venom gland.

It localises to the secreted. This is Neurotoxin X-29S from Olivierus martensii (Manchurian scorpion).